Here is a 285-residue protein sequence, read N- to C-terminus: UPF0354 protein MW1686 (285 aa).

It belongs to the UPF0354 family.

This Staphylococcus aureus (strain MW2) protein is UPF0354 protein MW1686.